A 99-amino-acid chain; its full sequence is NADH-ubiquinone oxidoreductase chain 4L (99 aa).

Transmembrane regions (helical) follow at residues 2 to 22 (YYRY…GIVL), 27 to 47 (LIIM…LFLI), and 59 to 79 (VFTI…LAIM).

Belongs to the complex I subunit 4L family.

The protein localises to the mitochondrion membrane. It catalyses the reaction a ubiquinone + NADH + 5 H(+)(in) = a ubiquinol + NAD(+) + 4 H(+)(out). Core subunit of the mitochondrial membrane respiratory chain NADH dehydrogenase (Complex I) that is believed to belong to the minimal assembly required for catalysis. Complex I functions in the transfer of electrons from NADH to the respiratory chain. The immediate electron acceptor for the enzyme is believed to be ubiquinone. This chain is NADH-ubiquinone oxidoreductase chain 4L (ND4L), found in Metridium senile (Brown sea anemone).